A 295-amino-acid polypeptide reads, in one-letter code: MSKDIATPGRTTEILKKYGFLFKKSLGQNFLIDSNILTRITDTAEITKETNVIEIGPGIGALTEQLAKTANEVVAFEIDQRLLPILDDTLSAYNNVKVVHGDVLKADVEEVIAEQFAKPELPLKIVANLPYYVTTPIILKLLHDNIPADSMTFMLQKEVADRISAVPSTKSYGSLTIAIQFYMEAELAFIVPKTVFMPQPNVDSAVIHLKRRKEPLAEVNDEEFFFEVTRASFAQRRKTLWNNLASKFPALKPRKDELVEGLNAIGIDLIRRGETLDIPEFAKLSNFLGDFLKEK.

S-adenosyl-L-methionine is bound by residues Asn29, Leu31, Gly56, Glu77, Asp102, and Asn128.

This sequence belongs to the class I-like SAM-binding methyltransferase superfamily. rRNA adenine N(6)-methyltransferase family. RsmA subfamily.

It is found in the cytoplasm. It carries out the reaction adenosine(1518)/adenosine(1519) in 16S rRNA + 4 S-adenosyl-L-methionine = N(6)-dimethyladenosine(1518)/N(6)-dimethyladenosine(1519) in 16S rRNA + 4 S-adenosyl-L-homocysteine + 4 H(+). Its function is as follows. Specifically dimethylates two adjacent adenosines (A1518 and A1519) in the loop of a conserved hairpin near the 3'-end of 16S rRNA in the 30S particle. May play a critical role in biogenesis of 30S subunits. The sequence is that of Ribosomal RNA small subunit methyltransferase A from Listeria monocytogenes serovar 1/2a (strain ATCC BAA-679 / EGD-e).